The sequence spans 400 residues: General L-amino acid transport system permease protein AapQ (400 aa).

Transmembrane regions (helical) follow at residues 29–49 (SIFYQILTIVILVGFVWWVAH), 100–120 (LLVAVTGIFTATIIGFLIGIG), 142–162 (IPPLLVIFFWYLGVLSVLPQP), 188–208 (TGMIAVGIALVIAIVASIIIA), 225–245 (VWTAIALIVGLPLLVFVVSGF), 264–284 (VVGPEFMSLFLALSFYTASFI), 340–360 (NSSLAIAIGFSDLVAVGGTIL), and 367–387 (IEIVCIWGIVYLSLSILTSLF). Positions 96 to 388 (ILNTLLVAVT…SLSILTSLFM (293 aa)) constitute an ABC transmembrane type-1 domain.

This sequence belongs to the binding-protein-dependent transport system permease family. HisMQ subfamily.

The protein localises to the cell inner membrane. Its function is as follows. Part of a binding-protein-dependent transport system for L-amino acids, affects the uptake as well as efflux of these amino acids. Probably responsible for the translocation of the substrate across the membrane. The protein is General L-amino acid transport system permease protein AapQ (aapQ) of Rhizobium johnstonii (strain DSM 114642 / LMG 32736 / 3841) (Rhizobium leguminosarum bv. viciae).